The chain runs to 263 residues: tRNA pseudouridine synthase A (263 aa).

Residue Asp73 is the Nucleophile of the active site. Tyr131 is a substrate binding site.

This sequence belongs to the tRNA pseudouridine synthase TruA family. As to quaternary structure, homodimer.

The enzyme catalyses uridine(38/39/40) in tRNA = pseudouridine(38/39/40) in tRNA. In terms of biological role, formation of pseudouridine at positions 38, 39 and 40 in the anticodon stem and loop of transfer RNAs. The chain is tRNA pseudouridine synthase A from Mycoplasmoides gallisepticum (strain R(low / passage 15 / clone 2)) (Mycoplasma gallisepticum).